The following is a 632-amino-acid chain: MAU2 chromatid cohesion factor homolog (632 aa).

2 TPR repeats span residues 453–486 (GGFY…ANAE) and 493–526 (SCSL…ASKI).

This sequence belongs to the SCC4/mau-2 family. In terms of assembly, interacts with Nipped-B to form the cohesin loading complex.

Its subcellular location is the nucleus. It localises to the nucleoplasm. Required for association of the cohesin complex with chromatin during interphase. Plays a role in sister chromatid cohesion and normal progression through prometaphase. In Drosophila sechellia (Fruit fly), this protein is MAU2 chromatid cohesion factor homolog.